A 330-amino-acid chain; its full sequence is Serpentine receptor class J-38 (330 aa).

7 helical membrane passes run 6–26, 43–63, 98–118, 135–155, 200–220, 253–273, and 285–305; these read IYIFLPRISCALAWVVNPIFV, LLLFFALFNLLYSVVNVVVPI, LVASSYALLLVHFIYRFLVIY, LLLSVAYFVAWQTICWFLGYA, TIIWSSISVASISAYMVLALL, IPIVISFSPCLLCWYTPIFGI, and GALGLFSFVDPIAIILCLPIF.

Belongs to the nematode receptor-like protein srj family.

It localises to the membrane. The chain is Serpentine receptor class J-38 (srj-38) from Caenorhabditis elegans.